Consider the following 377-residue polypeptide: MSDSSHNLLYNKFELPESVKMSPVEGAVGGIDKVARFVADPLEKGMGHTLGSALRRALLIGLEAPAIVSFSMTGVLHEYMAVEGIIEDVTNIVLNLKGSLLKKYPLQDCEGGRCSQKLRATISIDASDLAAAGGQKEVTLGDLLQEGTFEAVNPEHVIFTVTRPMQLEVMLRVAFGRGYSPSERIVLEERGMNEIVLDAAFSPVVLVNYFVEDTRVGQDTDFDRLVLQVETDGRVAPKEAVAFATQILSKHFSVFEKMDEKRIVFEEAISVEKENKDDILHKLVLGINEIELSVRSTNCLSNANIETIGELVIMPEPRLLQFRNFGKKSLCEIKNKLKEMKLELGMDLSQFGVGLDNVKEKMKWYAEKIRLSKNTKG.

The segment at M1–D259 is alpha N-terminal domain (alpha-NTD). The segment at K276 to G377 is alpha C-terminal domain (alpha-CTD).

The protein belongs to the RNA polymerase alpha chain family. Homodimer. The RNAP catalytic core consists of 2 alpha, 1 beta, 1 beta' and 1 omega subunit. When a sigma factor is associated with the core the holoenzyme is formed, which can initiate transcription.

The enzyme catalyses RNA(n) + a ribonucleoside 5'-triphosphate = RNA(n+1) + diphosphate. Functionally, DNA-dependent RNA polymerase catalyzes the transcription of DNA into RNA using the four ribonucleoside triphosphates as substrates. The protein is DNA-directed RNA polymerase subunit alpha of Chlamydia trachomatis serovar A (strain ATCC VR-571B / DSM 19440 / HAR-13).